A 435-amino-acid polypeptide reads, in one-letter code: 3-phosphoshikimate 1-carboxyvinyltransferase (435 aa).

Positions 22, 23, and 27 each coordinate 3-phosphoshikimate. Lysine 22 lines the phosphoenolpyruvate pocket. Residues glycine 95 and arginine 123 each coordinate phosphoenolpyruvate. 4 residues coordinate 3-phosphoshikimate: serine 168, glutamine 170, aspartate 319, and lysine 346. Glutamine 170 provides a ligand contact to phosphoenolpyruvate. Residue aspartate 319 is the Proton acceptor of the active site. Residues arginine 350 and arginine 393 each coordinate phosphoenolpyruvate.

Belongs to the EPSP synthase family. As to quaternary structure, monomer.

It localises to the cytoplasm. It carries out the reaction 3-phosphoshikimate + phosphoenolpyruvate = 5-O-(1-carboxyvinyl)-3-phosphoshikimate + phosphate. The protein operates within metabolic intermediate biosynthesis; chorismate biosynthesis; chorismate from D-erythrose 4-phosphate and phosphoenolpyruvate: step 6/7. Its function is as follows. Catalyzes the transfer of the enolpyruvyl moiety of phosphoenolpyruvate (PEP) to the 5-hydroxyl of shikimate-3-phosphate (S3P) to produce enolpyruvyl shikimate-3-phosphate and inorganic phosphate. This Chloroflexus aurantiacus (strain ATCC 29364 / DSM 637 / Y-400-fl) protein is 3-phosphoshikimate 1-carboxyvinyltransferase.